Reading from the N-terminus, the 78-residue chain is Keratin-associated protein 6-5 (78 aa).

The 25 X 2 AA repeats of G-[YCGS] stretch occupies residues 3 to 76 (GYYGNYYGGR…GSGYGSGFGY (74 aa)).

The protein belongs to the KRTAP type 6 family. As to quaternary structure, interacts with hair keratins. Strong expression in narrowly defined pattern restricted to the lower and middle cortical regions of the hair shaft in both developing and cycling hair. During hair follicle regression (catagen), expression levels decrease until expression is no longer detectable in follicles at resting stage (telogen).

Functionally, in the hair cortex, hair keratin intermediate filaments are embedded in an interfilamentous matrix, consisting of hair keratin-associated proteins (KRTAP), which are essential for the formation of a rigid and resistant hair shaft through their extensive disulfide bond cross-linking with abundant cysteine residues of hair keratins. The matrix proteins include the high-sulfur and high-glycine-tyrosine keratins. The protein is Keratin-associated protein 6-5 (Krtap6-5) of Mus musculus (Mouse).